The sequence spans 205 residues: MSSTRLETLALCLQNVLADKLANVDQQLDQLIITVSPVNLLPVMSVLRDHPELGFEMLIDLCGVDYSIYGVEPTSEQGREGKRFAVVYHLLSIRHNRRVRVKAFPEDDEFPVVVSVIDIWPSANWFEREAFDLYGIVFTGHPDLRRILTDYGFIGNPFRKDFPLSGNVEMRYDPDQQRVVYQPVTIEPRQITPRVIREEHYGDSE.

Belongs to the complex I 30 kDa subunit family. As to quaternary structure, NDH-1 is composed of 14 different subunits. Subunits NuoB, C, D, E, F, and G constitute the peripheral sector of the complex.

It is found in the cell inner membrane. The catalysed reaction is a quinone + NADH + 5 H(+)(in) = a quinol + NAD(+) + 4 H(+)(out). In terms of biological role, NDH-1 shuttles electrons from NADH, via FMN and iron-sulfur (Fe-S) centers, to quinones in the respiratory chain. The immediate electron acceptor for the enzyme in this species is believed to be ubiquinone. Couples the redox reaction to proton translocation (for every two electrons transferred, four hydrogen ions are translocated across the cytoplasmic membrane), and thus conserves the redox energy in a proton gradient. This is NADH-quinone oxidoreductase subunit C from Nitrosospira multiformis (strain ATCC 25196 / NCIMB 11849 / C 71).